The chain runs to 131 residues: Nuclear envelope phosphatase-regulatory subunit 1 homolog (131 aa).

The next 2 helical transmembrane spans lie at 33-53 (LLAVVLSAMSMCTAISAWYWL) and 68-88 (WIHPVFTVATLTLVVLFILGI).

This sequence belongs to the CNEP1R1 family.

The protein localises to the nucleus membrane. The protein resides in the cytoplasm. Functionally, may form with the serine/threonine protein phosphatase l(1)G0269 an active complex dephosphorylating and activating lipin-like phosphatases. Lipins are phosphatidate phosphatases that catalyze the conversion of phosphatidic acid to diacylglycerol and control the metabolism of fatty acids at different levels. In Drosophila melanogaster (Fruit fly), this protein is Nuclear envelope phosphatase-regulatory subunit 1 homolog.